The primary structure comprises 493 residues: 3-octaprenyl-4-hydroxybenzoate carboxy-lyase (493 aa).

Asn-172 is a binding site for Mn(2+). Residues 175-177 (IYR), 189-191 (RWL), and 194-195 (RG) contribute to the prenylated FMN site. Residue Glu-238 participates in Mn(2+) binding. Asp-287 acts as the Proton donor in catalysis.

Belongs to the UbiD family. Homohexamer. The cofactor is prenylated FMN. Mn(2+) serves as cofactor.

The protein resides in the cell membrane. The enzyme catalyses a 4-hydroxy-3-(all-trans-polyprenyl)benzoate + H(+) = a 2-(all-trans-polyprenyl)phenol + CO2. It functions in the pathway cofactor biosynthesis; ubiquinone biosynthesis. Catalyzes the decarboxylation of 3-octaprenyl-4-hydroxy benzoate to 2-octaprenylphenol, an intermediate step in ubiquinone biosynthesis. This Shewanella woodyi (strain ATCC 51908 / MS32) protein is 3-octaprenyl-4-hydroxybenzoate carboxy-lyase.